The following is a 141-amino-acid chain: Transcriptional regulator MraZ (141 aa).

SpoVT-AbrB domains lie at 5–47 and 76–119; these read TFNL…KPAD and ANLV…DKVQ.

The protein belongs to the MraZ family. In terms of assembly, forms oligomers.

It is found in the cytoplasm. Its subcellular location is the nucleoid. The polypeptide is Transcriptional regulator MraZ (Mycoplasma genitalium (strain ATCC 33530 / DSM 19775 / NCTC 10195 / G37) (Mycoplasmoides genitalium)).